An 827-amino-acid polypeptide reads, in one-letter code: MTALKKIEKAAPLPVSTNFGIEGMTCASCVRRVEKAITAVPGVASANVNLATERATVQFDGEPDTLAVLHAIEKAGYAPRIATEELQIEGMTCASCVSRVEKALKAVPGVADAAVNLATEKATVSLISGTADLSALEAAVRGAGYELRKTKPAEASAGDEDHRAAELGSLKSAVTISVLMTLPLFLMEMGSHFISGVHELIMGTIGMRNNLYLQFALATLVLFGPGLRFFRKGVPNLLRWTPDMNSLVVLGTTAAWGYSVVATFVPRVLPSGTANVYYEAAAVIVTLVLLGRYLESRAKGRTSQAIKRLVGLQPKTAFVLRGGEFVEAQISEVVAGDVIRIRPGEKIPVDGTVIDGSSYVDEAMITGEPLPVQKTADSAVVGGTINKTGSITFKATKVGSDTLLAQIIKLVETAQGSKLPIQALVDRVTGWFVPAVILAAVLTFAAWYTFGPSPALSFALVNAVAVLIIACPCAMGLATPTSIMVGTGRAAELGILFRKGEALQRLRDADVVALDKTGTLTKGRPELTDLVAAEGFEADEVLFLVASLETLSEHPIAEAIVSAAKSKGIATAAVNGFEATPGFGVSGSVSGRQVLVGADRALATNGIDVSGFSTEAELLGASGKSPLYAAIEGRLAAIVAVSDPVKETTPQAIRSLHELGLKVAMITGDNRRTAEAIARKLGIDEVVAEVLPEGKVEAIRKLRQGGRSVAFIGDGINDAPALAEADVGIAVGTGTDIAIESADVVLMSGDLNGVAKAIALSKATILNIKQNLFWAFAYNVSLIPVAAGVLYPVTGILLSPIFAAAAMAMSSVFVLGNALRLKSVNPA.

HMA domains are found at residues 15-80 and 82-148; these read VSTN…YAPR and ATEE…YELR. The Cu cation site is built by Cys26, Cys29, Cys93, and Cys96. Transmembrane regions (helical) follow at residues 174-194, 210-230, 246-266, 271-291, 430-450, and 458-478; these read VTIS…SHFI, NLYL…LRFF, SLVV…TFVP, SGTA…VLLG, GWFV…WYTF, and FALV…MGLA. The active-site 4-aspartylphosphate intermediate is Asp515. Residues Asp714 and Asp718 each coordinate Mg(2+). The next 2 membrane-spanning stretches (helical) occupy residues 771 to 793 and 797 to 819; these read NLFW…LYPV and LLSP…GNAL.

The protein belongs to the cation transport ATPase (P-type) (TC 3.A.3) family. Type IB subfamily.

The protein resides in the cell membrane. It catalyses the reaction Cu(2+)(in) + ATP + H2O = Cu(2+)(out) + ADP + phosphate + H(+). Its function is as follows. Involved in copper transport. This is Copper-transporting ATPase 2 (actP2) from Rhizobium meliloti (strain 1021) (Ensifer meliloti).